Reading from the N-terminus, the 136-residue chain is Heme-binding protein Rv0203 (136 aa).

The N-terminal stretch at 1–27 (MKTGTATTRRRLLAVLIALALPGAAVA) is a signal peptide. Residues cysteine 41 and cysteine 115 are joined by a disulfide bond. 3 residues coordinate heme: tyrosine 60, histidine 64, and histidine 90.

As to quaternary structure, dimer of dimers.

The protein resides in the secreted. Functionally, part of a heme-iron acquisition system. Acts by binding heme and delivering it to the membrane proteins MmpL3 and MmpL11. Can use free heme or heme from host hemoglobin. The protein is Heme-binding protein Rv0203 of Mycobacterium tuberculosis (strain ATCC 25618 / H37Rv).